A 429-amino-acid polypeptide reads, in one-letter code: 3-isopropylmalate dehydratase large subunit (429 aa).

Cysteine 303, cysteine 363, and cysteine 366 together coordinate [4Fe-4S] cluster.

Belongs to the aconitase/IPM isomerase family. LeuC type 2 subfamily. As to quaternary structure, heterodimer of LeuC and LeuD. It depends on [4Fe-4S] cluster as a cofactor.

The catalysed reaction is (2R,3S)-3-isopropylmalate = (2S)-2-isopropylmalate. It functions in the pathway amino-acid biosynthesis; L-leucine biosynthesis; L-leucine from 3-methyl-2-oxobutanoate: step 2/4. In terms of biological role, catalyzes the isomerization between 2-isopropylmalate and 3-isopropylmalate, via the formation of 2-isopropylmaleate. This chain is 3-isopropylmalate dehydratase large subunit, found in Caldicellulosiruptor saccharolyticus (strain ATCC 43494 / DSM 8903 / Tp8T 6331).